Here is a 186-residue protein sequence, read N- to C-terminus: Elongation factor P (186 aa).

The protein belongs to the elongation factor P family.

It localises to the cytoplasm. It functions in the pathway protein biosynthesis; polypeptide chain elongation. Functionally, involved in peptide bond synthesis. Stimulates efficient translation and peptide-bond synthesis on native or reconstituted 70S ribosomes in vitro. Probably functions indirectly by altering the affinity of the ribosome for aminoacyl-tRNA, thus increasing their reactivity as acceptors for peptidyl transferase. This Streptococcus sanguinis (strain SK36) protein is Elongation factor P.